Consider the following 207-residue polypeptide: MANYDVLKVDGTKSGSVELSDAVFAIEPNNNVLFEAINLQRASLRQGTHAVKNRSAVRGGGRKPWRQKGTGRARQGTIRAPQWRGGGIVFGPTPRSYSYKMPKKMRRLALRSALSFKVQEKGLTVVDALNLDAPKTKEFKTVLSNLEQPKKVLVVTESEDVNVALSARNIPGVQVTTAQGLNVLDITSADSVVITESAAKKVEEVLG.

The segment at 53-76 is disordered; that stretch reads NRSAVRGGGRKPWRQKGTGRARQG. A compositionally biased stretch (basic residues) spans 60-71; the sequence is GGRKPWRQKGTG.

This sequence belongs to the universal ribosomal protein uL4 family. As to quaternary structure, part of the 50S ribosomal subunit.

Functionally, one of the primary rRNA binding proteins, this protein initially binds near the 5'-end of the 23S rRNA. It is important during the early stages of 50S assembly. It makes multiple contacts with different domains of the 23S rRNA in the assembled 50S subunit and ribosome. In terms of biological role, forms part of the polypeptide exit tunnel. This chain is Large ribosomal subunit protein uL4, found in Staphylococcus saprophyticus subsp. saprophyticus (strain ATCC 15305 / DSM 20229 / NCIMB 8711 / NCTC 7292 / S-41).